The following is a 409-amino-acid chain: Glucan endo-1,6-beta-glucosidase B (409 aa).

A signal peptide spans 1–16 (MKFILPLFTSLPVALA). Asn-35 carries an N-linked (GlcNAc...) asparagine glycan. Glu-228 (proton donor) is an active-site residue. Glu-330 functions as the Nucleophile in the catalytic mechanism.

The protein belongs to the glycosyl hydrolase 5 (cellulase A) family.

The protein localises to the secreted. The enzyme catalyses Random hydrolysis of (1-&gt;6)-linkages in (1-&gt;6)-beta-D-glucans.. Functionally, beta-glucanases participate in the metabolism of beta-glucan, the main structural component of the cell wall. Acts on lutean, pustulan and 1,6-oligo-beta-D-glucosides. The chain is Glucan endo-1,6-beta-glucosidase B (exgB) from Emericella nidulans (strain FGSC A4 / ATCC 38163 / CBS 112.46 / NRRL 194 / M139) (Aspergillus nidulans).